Here is a 66-residue protein sequence, read N- to C-terminus: Large ribosomal subunit protein bL35 (66 aa).

Basic residues predominate over residues 1-16 (MPKQKTHRASAKRFKR). Positions 1 to 21 (MPKQKTHRASAKRFKRTGSGG) are disordered.

It belongs to the bacterial ribosomal protein bL35 family.

This chain is Large ribosomal subunit protein bL35, found in Streptococcus mutans serotype c (strain ATCC 700610 / UA159).